Consider the following 439-residue polypeptide: Magnesium-dependent glutamate N-prenyltransferase (439 aa).

Mg(2+) contacts are provided by Asn-322, Thr-326, Glu-330, and Phe-337.

This sequence belongs to the terpene synthase family. Mg(2+) is required as a cofactor.

The enzyme catalyses dimethylallyl diphosphate + L-glutamate = prekainate + diphosphate. The protein operates within secondary metabolite biosynthesis. Its function is as follows. Magnesium-dependent glutamate N-prenyltransferase: part of the gene cluster that mediates the biosynthesis of kainic acid (KA) and derivatives, natural products with neurochemical activity acting as ionotropic glutamate receptor (iGluR) agonists, thus being neurotoxins. Catalyzes the conversion of L-glutamic acid (L-Glu) to prekainic acid in the presence of dimethylallyl diphosphate (DMAPP). Can also use geranyl diphosphate (GPP) as substrate, thus leading to the formation of N-geranyl-L-glutamic acid (L-NGG). The chain is Magnesium-dependent glutamate N-prenyltransferase from Digenea simplex (Marine red alga).